We begin with the raw amino-acid sequence, 378 residues long: Erythronate-4-phosphate dehydrogenase (378 aa).

Residues S45 and T66 each coordinate substrate. Positions 146 and 175 each coordinate NAD(+). The active site involves R208. D232 contacts NAD(+). The active site involves E237. Catalysis depends on H254, which acts as the Proton donor. G257 is a binding site for NAD(+). Y258 is a binding site for substrate.

This sequence belongs to the D-isomer specific 2-hydroxyacid dehydrogenase family. PdxB subfamily. Homodimer.

It is found in the cytoplasm. The catalysed reaction is 4-phospho-D-erythronate + NAD(+) = (R)-3-hydroxy-2-oxo-4-phosphooxybutanoate + NADH + H(+). The protein operates within cofactor biosynthesis; pyridoxine 5'-phosphate biosynthesis; pyridoxine 5'-phosphate from D-erythrose 4-phosphate: step 2/5. In terms of biological role, catalyzes the oxidation of erythronate-4-phosphate to 3-hydroxy-2-oxo-4-phosphonooxybutanoate. The polypeptide is Erythronate-4-phosphate dehydrogenase (Shigella boydii serotype 4 (strain Sb227)).